The following is a 353-amino-acid chain: S-adenosylmethionine:tRNA ribosyltransferase-isomerase (353 aa).

This sequence belongs to the QueA family. In terms of assembly, monomer.

Its subcellular location is the cytoplasm. The enzyme catalyses 7-aminomethyl-7-carbaguanosine(34) in tRNA + S-adenosyl-L-methionine = epoxyqueuosine(34) in tRNA + adenine + L-methionine + 2 H(+). It participates in tRNA modification; tRNA-queuosine biosynthesis. Transfers and isomerizes the ribose moiety from AdoMet to the 7-aminomethyl group of 7-deazaguanine (preQ1-tRNA) to give epoxyqueuosine (oQ-tRNA). This chain is S-adenosylmethionine:tRNA ribosyltransferase-isomerase, found in Rickettsia bellii (strain OSU 85-389).